The primary structure comprises 352 residues: MAIISSNIGDNDFSLRKKELRLVDSKIIPEEKRKNNLNLARPITFQEFIGQEKLKSSLRIAIDASIYRKEPLEHTLLYGQPGLGKTTLAFLIAKEMNTKCRIATAPAIERPRDIVGLLLGLKEGEVLFIDEIHRLNRLTEELLYSAMEDFRLDLTMGANRGARCRTINLPRFTLVGATTKLASISAPLRDRFGISQKIEFYTCDELKQIIDNFSRLISFNVDDEASSHLAKISRGTPRIALRLLRRVRDYAQVVKKTNVISVNLIKKALNSYQIDEKGLDYVDRQYLSFLNQNKNIPTGLDSIAAGLGDDSSMLEFVVEPYLIQIGFLTRTPRGRLLTALGKKYIDSKNDNF.

Residues 13–201 (FSLRKKELRL…FGISQKIEFY (189 aa)) form a large ATPase domain (RuvB-L) region. ATP-binding positions include Arg41, Gly82, Lys85, Thr86, Thr87, 148–150 (EDF), Arg191, Tyr201, and Arg238. A Mg(2+)-binding site is contributed by Thr86. The small ATPAse domain (RuvB-S) stretch occupies residues 202-273 (TCDELKQIID…LIKKALNSYQ (72 aa)). The interval 276–352 (EKGLDYVDRQ…KYIDSKNDNF (77 aa)) is head domain (RuvB-H). Arg330 and Arg335 together coordinate DNA.

Belongs to the RuvB family. As to quaternary structure, homohexamer. Forms an RuvA(8)-RuvB(12)-Holliday junction (HJ) complex. HJ DNA is sandwiched between 2 RuvA tetramers; dsDNA enters through RuvA and exits via RuvB. An RuvB hexamer assembles on each DNA strand where it exits the tetramer. Each RuvB hexamer is contacted by two RuvA subunits (via domain III) on 2 adjacent RuvB subunits; this complex drives branch migration. In the full resolvosome a probable DNA-RuvA(4)-RuvB(12)-RuvC(2) complex forms which resolves the HJ.

Its subcellular location is the cytoplasm. The enzyme catalyses ATP + H2O = ADP + phosphate + H(+). In terms of biological role, the RuvA-RuvB-RuvC complex processes Holliday junction (HJ) DNA during genetic recombination and DNA repair, while the RuvA-RuvB complex plays an important role in the rescue of blocked DNA replication forks via replication fork reversal (RFR). RuvA specifically binds to HJ cruciform DNA, conferring on it an open structure. The RuvB hexamer acts as an ATP-dependent pump, pulling dsDNA into and through the RuvAB complex. RuvB forms 2 homohexamers on either side of HJ DNA bound by 1 or 2 RuvA tetramers; 4 subunits per hexamer contact DNA at a time. Coordinated motions by a converter formed by DNA-disengaged RuvB subunits stimulates ATP hydrolysis and nucleotide exchange. Immobilization of the converter enables RuvB to convert the ATP-contained energy into a lever motion, pulling 2 nucleotides of DNA out of the RuvA tetramer per ATP hydrolyzed, thus driving DNA branch migration. The RuvB motors rotate together with the DNA substrate, which together with the progressing nucleotide cycle form the mechanistic basis for DNA recombination by continuous HJ branch migration. Branch migration allows RuvC to scan DNA until it finds its consensus sequence, where it cleaves and resolves cruciform DNA. In Prochlorococcus marinus (strain MIT 9312), this protein is Holliday junction branch migration complex subunit RuvB.